The primary structure comprises 228 residues: Protein GrpE (228 aa).

Over residues 1-22 the composition is skewed to basic and acidic residues; it reads MDDKQKTNEEVKASSFDSEKSS. A disordered region spans residues 1 to 71; that stretch reads MDDKQKTNEE…DQTNTNNNEL (71 aa). Over residues 38–53 the composition is skewed to polar residues; the sequence is QNVQHDNGSNPAQKQN.

This sequence belongs to the GrpE family. As to quaternary structure, homodimer.

It is found in the cytoplasm. In terms of biological role, participates actively in the response to hyperosmotic and heat shock by preventing the aggregation of stress-denatured proteins, in association with DnaK and GrpE. It is the nucleotide exchange factor for DnaK and may function as a thermosensor. Unfolded proteins bind initially to DnaJ; upon interaction with the DnaJ-bound protein, DnaK hydrolyzes its bound ATP, resulting in the formation of a stable complex. GrpE releases ADP from DnaK; ATP binding to DnaK triggers the release of the substrate protein, thus completing the reaction cycle. Several rounds of ATP-dependent interactions between DnaJ, DnaK and GrpE are required for fully efficient folding. This Coprothermobacter proteolyticus (strain ATCC 35245 / DSM 5265 / OCM 4 / BT) protein is Protein GrpE.